The following is a 318-amino-acid chain: Acetyl-coenzyme A carboxylase carboxyl transferase subunit alpha (318 aa).

The region spanning 34–295 is the CoA carboxyltransferase C-terminal domain; that stretch reads SIEEEITKLR…KATIKQQLAQ (262 aa).

The protein belongs to the AccA family. As to quaternary structure, acetyl-CoA carboxylase is a heterohexamer composed of biotin carboxyl carrier protein (AccB), biotin carboxylase (AccC) and two subunits each of ACCase subunit alpha (AccA) and ACCase subunit beta (AccD).

The protein resides in the cytoplasm. The catalysed reaction is N(6)-carboxybiotinyl-L-lysyl-[protein] + acetyl-CoA = N(6)-biotinyl-L-lysyl-[protein] + malonyl-CoA. The protein operates within lipid metabolism; malonyl-CoA biosynthesis; malonyl-CoA from acetyl-CoA: step 1/1. Its function is as follows. Component of the acetyl coenzyme A carboxylase (ACC) complex. First, biotin carboxylase catalyzes the carboxylation of biotin on its carrier protein (BCCP) and then the CO(2) group is transferred by the carboxyltransferase to acetyl-CoA to form malonyl-CoA. This Pseudoalteromonas atlantica (strain T6c / ATCC BAA-1087) protein is Acetyl-coenzyme A carboxylase carboxyl transferase subunit alpha.